We begin with the raw amino-acid sequence, 176 residues long: Oleosin Ara h 14.0102 (176 aa).

A2 is modified (N-acetylalanine; alternate). Transmembrane regions (helical) follow at residues 61-81 and 87-107; these read GTLL…LAIA and FFSP…IGIL. The interval 156–176 is disordered; it reads KTKDAGQEIQTKAQDVKRSSS.

Belongs to the oleosin family. Homodimer. Forms oligomers. As to expression, expressed in seeds (at protein level). Not expressed in leaves.

It localises to the lipid droplet. The protein resides in the membrane. In terms of biological role, may have a structural role to stabilize the lipid body during desiccation of the seed by preventing coalescence of the oil. Probably interacts with both lipid and phospholipid moieties of lipid bodies. May also provide recognition signals for specific lipase anchorage in lipolysis during seedling growth. The protein is Oleosin Ara h 14.0102 of Arachis hypogaea (Peanut).